Here is a 118-residue protein sequence, read N- to C-terminus: UPF0102 protein CMM_1377 (118 aa).

Belongs to the UPF0102 family.

The polypeptide is UPF0102 protein CMM_1377 (Clavibacter michiganensis subsp. michiganensis (strain NCPPB 382)).